The primary structure comprises 398 residues: 1-deoxy-D-xylulose 5-phosphate reductoisomerase (398 aa).

The NADPH site is built by threonine 10, glycine 11, serine 12, isoleucine 13, glycine 36, asparagine 38, and asparagine 124. Lysine 125 serves as a coordination point for 1-deoxy-D-xylulose 5-phosphate. Glutamate 126 is an NADPH binding site. A Mn(2+)-binding site is contributed by aspartate 150. The 1-deoxy-D-xylulose 5-phosphate site is built by serine 151, glutamate 152, serine 176, and histidine 199. Residue glutamate 152 coordinates Mn(2+). Glycine 205 lines the NADPH pocket. Serine 212, asparagine 217, lysine 218, and glutamate 221 together coordinate 1-deoxy-D-xylulose 5-phosphate. Mn(2+) is bound at residue glutamate 221.

It belongs to the DXR family. It depends on Mg(2+) as a cofactor. Mn(2+) is required as a cofactor.

It carries out the reaction 2-C-methyl-D-erythritol 4-phosphate + NADP(+) = 1-deoxy-D-xylulose 5-phosphate + NADPH + H(+). Its pathway is isoprenoid biosynthesis; isopentenyl diphosphate biosynthesis via DXP pathway; isopentenyl diphosphate from 1-deoxy-D-xylulose 5-phosphate: step 1/6. Catalyzes the NADPH-dependent rearrangement and reduction of 1-deoxy-D-xylulose-5-phosphate (DXP) to 2-C-methyl-D-erythritol 4-phosphate (MEP). The sequence is that of 1-deoxy-D-xylulose 5-phosphate reductoisomerase from Nostoc punctiforme (strain ATCC 29133 / PCC 73102).